A 93-amino-acid polypeptide reads, in one-letter code: Cell division protein CrgA (93 aa).

The next 2 membrane-spanning stretches (helical) occupy residues V31 to F51 and L70 to M90.

Belongs to the CrgA family.

The protein resides in the cell membrane. In terms of biological role, involved in cell division. In Mycobacterium leprae (strain Br4923), this protein is Cell division protein CrgA.